The chain runs to 391 residues: 5-amino-6-(D-ribitylamino)uracil--L-tyrosine 4-hydroxyphenyl transferase (391 aa).

In terms of domain architecture, Radical SAM core spans 55–302 (VTYVINRNIN…GAVARIYLGN (248 aa)). [4Fe-4S] cluster-binding residues include Cys-69, Cys-73, and Cys-76.

The protein belongs to the radical SAM superfamily. CofH family. Consists of two subunits, CofG and CofH. It depends on [4Fe-4S] cluster as a cofactor.

It catalyses the reaction 5-amino-6-(D-ribitylamino)uracil + L-tyrosine + S-adenosyl-L-methionine = 5-amino-5-(4-hydroxybenzyl)-6-(D-ribitylimino)-5,6-dihydrouracil + 2-iminoacetate + 5'-deoxyadenosine + L-methionine + H(+). It functions in the pathway cofactor biosynthesis; coenzyme F0 biosynthesis. Functionally, catalyzes the radical-mediated synthesis of 5-amino-5-(4-hydroxybenzyl)-6-(D-ribitylimino)-5,6-dihydrouracil from 5-amino-6-(D-ribitylamino)uracil and L-tyrosine. This Trichormus variabilis (strain ATCC 29413 / PCC 7937) (Anabaena variabilis) protein is 5-amino-6-(D-ribitylamino)uracil--L-tyrosine 4-hydroxyphenyl transferase.